Consider the following 102-residue polypeptide: Noncompact myelin-associated protein (102 aa).

Over 1–30 the chain is Extracellular; the sequence is MTTATPLGDTTFFSLNMTTRGEDFLYKSSG. A helical transmembrane segment spans residues 31–51; sequence AIVAAVVVVVIIIFTVVLILL. The Cytoplasmic portion of the chain corresponds to 52-102; that stretch reads KMYNRKMRTRRELEPKGPKPTAPSAVGPNSNGSQHPATVTFSPVDVQVETR. The tract at residues 60-102 is disordered; that stretch reads TRRELEPKGPKPTAPSAVGPNSNGSQHPATVTFSPVDVQVETR. The span at 78 to 92 shows a compositional bias: polar residues; sequence GPNSNGSQHPATVTF.

Post-translationally, glycosylated.

The protein localises to the cell membrane. Its function is as follows. Plays a role in myelin formation. In Homo sapiens (Human), this protein is Noncompact myelin-associated protein (NCMAP).